Consider the following 216-residue polypeptide: Guanylate kinase (216 aa).

The Guanylate kinase-like domain maps to 11-189 (GVLIVISGPS…AVKKIEAILL (179 aa)). An ATP-binding site is contributed by 18 to 25 (GPSGAGKG).

It belongs to the guanylate kinase family.

It localises to the cytoplasm. The catalysed reaction is GMP + ATP = GDP + ADP. Essential for recycling GMP and indirectly, cGMP. The polypeptide is Guanylate kinase (Clostridium perfringens (strain SM101 / Type A)).